An 846-amino-acid chain; its full sequence is Leucine--tRNA ligase (846 aa).

The short motif at 47–57 is the 'HIGH' region element; that stretch reads PYPSGRIHMGH. The 'KMSKS' region motif lies at 621-625; sequence KMSKS. An ATP-binding site is contributed by lysine 624.

It belongs to the class-I aminoacyl-tRNA synthetase family.

It localises to the cytoplasm. The catalysed reaction is tRNA(Leu) + L-leucine + ATP = L-leucyl-tRNA(Leu) + AMP + diphosphate. The sequence is that of Leucine--tRNA ligase from Zymomonas mobilis subsp. mobilis (strain ATCC 31821 / ZM4 / CP4).